A 1063-amino-acid polypeptide reads, in one-letter code: MFEDEPHAEGAAAVAAAREALQALCQELNLDEGSAAEALDDFTAIRGNYSLEGEVIHWLACSLYVACRKSIIPTVGKGVMEGNCVSLTRILRSAKLSLIQFFSKMKKWMDMSNLPQEFRERIERLERNFEVSTVIFKKFEPIFLDIFQNPYEEPPKLPRSRKQRRIPCSVKDLFNFCWTLFVYTKGNFRMIGDDLVNSYHLLLCCLDLIFANAIMCPNRRDLLNPSFKGLPSDFHAPDFKAAEEPPCIIAVLCDLHDGLLVEAKGIKEHYFKPYISKLFDKKILKGECLLDLSSFTDNSKAVNKEYEEYVLTVGDFDERIFLGADAEEEIGTPRKFTADTPFGKLTSQASVECNLQQHFEKKRSFAPSTPLTGRRYLQEKEAVTTPVASATQSVSRLQSIVAGLKSAPSEQLLNIFESCMRNPMGNIIKIVKGIGETFCQHYTQSTDKQPGSHIDFAVNRLKLAEILYYKILETIMVQETRRLHGMDMSVLLEQDIFHKSLMACCLEIVLFAYSSPRTFPWIIEVLDLQPFYFYKVIEVVIRSEEGLSRDMVKHLNSIEEQILESLAWTNNSALWEALHASANRVPSCEEVIFPNNFEIGNGGNVQGHLPMMPMSPIIHPRVKEVRTDSGSLRQDMQPLSPISVHERYSSPAAGSAKRRLFGDDPPKDTLMDKIMAEGTKLKIAPSSVTAESLSISPGQALLTMATTTVTGTTGRKVTVPLHGIANDAGEITLVPISMNPTQESTAESPVSLTAQSLIGTSPKQTHLTKAQDAHLTGVSKPKRTGSLALFYRKVYHLASVRLRDLCLKLDVSNELRRKIWTCFEFTLVHCPDLMKDRHLDQLLLCAFYIMAKVTKEERTFQEIMKSYRNQPQANSHVYRSVLLKSIPGGVVVYNGDCEMTDGDIEDATKTPNCSSEPVKEERGDLIKFYNTVYVGRVKSFALKYDLSNQDHIMDAPPLSPFPHIKQQPGSPRRISQQHSLYVSPHKNGAGLTPRSALLYKFNGSPSKSLKDINNMIRQGEQKTKKRVIAISGDADSPAKRLCQENDDVLLKRLQDVVSERANH.

Phosphothreonine occurs at positions 332, 369, and 385. The domain A stretch occupies residues 383–584 (VTTPVASATQ…WEALHASANR (202 aa)). Residues 383–944 (VTTPVASATQ…GRVKSFALKY (562 aa)) are pocket; binds T and E1A. Residues 585 to 779 (VPSCEEVIFP…AQDAHLTGVS (195 aa)) are spacer. Serine 640, serine 650, serine 748, and serine 761 each carry phosphoserine. The interval 780–944 (KPKRTGSLAL…GRVKSFALKY (165 aa)) is domain B. Phosphoserine occurs at positions 959, 970, and 983. Threonine 992 is subject to Phosphothreonine. Phosphoserine occurs at positions 1004 and 1036.

This sequence belongs to the retinoblastoma protein (RB) family. In terms of assembly, component of the DREAM complex (also named LINC complex) at least composed of E2F4, E2F5, LIN9, LIN37, LIN52, LIN54, MYBL1, MYBL2, RBL1, RBL2, RBBP4, TFDP1 and TFDP2. The complex exists in quiescent cells where it represses cell cycle-dependent genes. It dissociates in S phase when LIN9, LIN37, LIN52 and LIN54 form a subcomplex that binds to MYBL2. Interacts with AATF. Interacts with KDM5A. Interacts with KMT5B and KMT5C. Interacts with USP4. Interacts with RBBP9. In terms of processing, cell-cycle arrest properties are inactivated by phosphorylation on Thr-332, Ser-640, Ser-959 and Ser-970 by CDK4. Highly expressed in fetal heart and liver. Expressed at low levels in all other fetal tissues except skeletal muscle. High levels in neonatal spleen and thymus with low levels in other tissues. In adult, highly expressed in testis. Barely detectable in other tissues.

It localises to the nucleus. Key regulator of entry into cell division. Directly involved in heterochromatin formation by maintaining overall chromatin structure and, in particular, that of constitutive heterochromatin by stabilizing histone methylation. Recruits and targets histone methyltransferases KMT5B and KMT5C, leading to epigenetic transcriptional repression. Controls histone H4 'Lys-20' trimethylation. Probably acts as a transcription repressor by recruiting chromatin-modifying enzymes to promoters. Potent inhibitor of E2F-mediated trans-activation. May act as a tumor suppressor. This chain is Retinoblastoma-like protein 1 (Rbl1), found in Mus musculus (Mouse).